We begin with the raw amino-acid sequence, 364 residues long: Uroporphyrinogen decarboxylase (364 aa).

Residues 28–32 (RQAGR), D78, Y160, T215, and H333 each bind substrate.

Belongs to the uroporphyrinogen decarboxylase family. In terms of assembly, homodimer.

The protein localises to the cytoplasm. It catalyses the reaction uroporphyrinogen III + 4 H(+) = coproporphyrinogen III + 4 CO2. The protein operates within porphyrin-containing compound metabolism; protoporphyrin-IX biosynthesis; coproporphyrinogen-III from 5-aminolevulinate: step 4/4. Catalyzes the decarboxylation of four acetate groups of uroporphyrinogen-III to yield coproporphyrinogen-III. This chain is Uroporphyrinogen decarboxylase, found in Burkholderia thailandensis (strain ATCC 700388 / DSM 13276 / CCUG 48851 / CIP 106301 / E264).